Reading from the N-terminus, the 599-residue chain is Elongation factor 4 (599 aa).

Positions 5–187 (SHIRNFSIIA…RLVTTIPAPT (183 aa)) constitute a tr-type G domain. Residues 17–22 (DHGKST) and 134–137 (NKID) each bind GTP.

It belongs to the TRAFAC class translation factor GTPase superfamily. Classic translation factor GTPase family. LepA subfamily.

Its subcellular location is the cell inner membrane. It catalyses the reaction GTP + H2O = GDP + phosphate + H(+). Its function is as follows. Required for accurate and efficient protein synthesis under certain stress conditions. May act as a fidelity factor of the translation reaction, by catalyzing a one-codon backward translocation of tRNAs on improperly translocated ribosomes. Back-translocation proceeds from a post-translocation (POST) complex to a pre-translocation (PRE) complex, thus giving elongation factor G a second chance to translocate the tRNAs correctly. Binds to ribosomes in a GTP-dependent manner. This Pseudomonas fluorescens (strain ATCC BAA-477 / NRRL B-23932 / Pf-5) protein is Elongation factor 4.